The primary structure comprises 283 residues: MNGFFLVNKPEKMTSHDVVFQIKKKFHFDKVGHTGTLDPLASGLLIVCVGKATKLAFLFDKLSKTYQGTFLFNKHYDTLDVKGKLLDTKNIPLNDFAIQTSFASFHQKKYWQIPPMFSAVKIKGQKMYRLARQNQVVDIPPREVFIHHFEKKSLFCHDQVDFLVHVSKGTYIRSLARDLALQLNTYGALLRLQRTAIGTHLLQNAKTIENLELNDLILDSIFFASYDELILNDYLIKLVKNGTYLDQRQIITQKPFIVKDSNKNFVAYYDILDENKYYPRYFF.

The active-site Nucleophile is Asp38.

Belongs to the pseudouridine synthase TruB family. Type 1 subfamily.

The enzyme catalyses uridine(55) in tRNA = pseudouridine(55) in tRNA. Functionally, responsible for synthesis of pseudouridine from uracil-55 in the psi GC loop of transfer RNAs. In Aster yellows witches'-broom phytoplasma (strain AYWB), this protein is tRNA pseudouridine synthase B.